We begin with the raw amino-acid sequence, 388 residues long: Protein RMD5 homolog (388 aa).

Residues 112–144 (DTHIVNQIIANFFYRQGMFDIGDCFVAETGESE) enclose the LisH domain. A CTLH domain is found at 150–207 (SFVEMYRILEAMKRRDLEPALNWAVSNSDKLKEARSDLEMKLHSLHFLEIARGKNSKE). An RING-Gid-type zinc finger spans residues 330 to 374 (CPVSKEQSSDDNPPMMMSCGHVLCKQTINKMSKNGSKSSFKCPYC).

As to quaternary structure, interacts with RANBPM.

It is found in the cytoplasm. In Arabidopsis thaliana (Mouse-ear cress), this protein is Protein RMD5 homolog.